A 443-amino-acid chain; its full sequence is Glutamate--tRNA ligase 2 (443 aa).

The 'HIGH' region signature appears at proline 7–asparagine 17. A 'KMSKS' region motif is present at residues lysine 236–arginine 240. Position 239 (lysine 239) interacts with ATP.

Belongs to the class-I aminoacyl-tRNA synthetase family. Glutamate--tRNA ligase type 1 subfamily. In terms of assembly, monomer.

Its subcellular location is the cytoplasm. The catalysed reaction is tRNA(Glu) + L-glutamate + ATP = L-glutamyl-tRNA(Glu) + AMP + diphosphate. Its function is as follows. Catalyzes the attachment of glutamate to tRNA(Glu) in a two-step reaction: glutamate is first activated by ATP to form Glu-AMP and then transferred to the acceptor end of tRNA(Glu). This chain is Glutamate--tRNA ligase 2, found in Ehrlichia canis (strain Jake).